Consider the following 393-residue polypeptide: Cyclic GMP-AMP synthase-like receptor 1 (393 aa).

Glutamate 89, aspartate 91, and aspartate 205 together coordinate Mg(2+). Residue 89 to 91 (EFD) participates in ATP binding. Residues aspartate 205 and 251 to 258 (RASFYEAE) contribute to the GTP site. Residues 255-258 (YEAE), lysine 276, and 289-293 (SYHIK) contribute to the ATP site.

The protein belongs to the mab-21 family. Requires Mg(2+) as cofactor. It depends on Mn(2+) as a cofactor.

The catalysed reaction is GTP + ATP = 3',2'-cGAMP + 2 diphosphate. It carries out the reaction GTP + ATP = pppA(2'-5')pG + diphosphate. The enzyme catalyses pppA(2'-5')pG = 3',2'-cGAMP + diphosphate. The enzyme activity is specifically activated by double-stranded RNA (dsRNA). Recognizes long dsRNA (&gt;30 bp) with no preference for 5' RNA phosphorylation. Nucleotidyltransferase that catalyzes the formation of cyclic GMP-AMP (3',2'-cGAMP) from ATP and GTP and plays a key role in innate immunity. Synthesizes 3',2'-cGAMP in a two-step reaction through production of the linear intermediate pppA(2'-5')pG. Acts as a key sensor of double-stranded RNA (dsRNA), the presence of dsRNA in the cytoplasm being a danger signal that triggers the immune responses. Directly binds dsRNA longer than 35 bp, activating the nucleotidyltransferase activity, leading to synthesis of 3',2'-cGAMP, a second messenger that binds to and activates Sting, thereby triggering the antiviral immune response via activation of the NF-kappa-B transcription factor Rel (Relish). This chain is Cyclic GMP-AMP synthase-like receptor 1, found in Drosophila simulans (Fruit fly).